The chain runs to 156 residues: Small ribosomal subunit protein uS7 (156 aa).

This sequence belongs to the universal ribosomal protein uS7 family. Part of the 30S ribosomal subunit. Contacts proteins S9 and S11.

In terms of biological role, one of the primary rRNA binding proteins, it binds directly to 16S rRNA where it nucleates assembly of the head domain of the 30S subunit. Is located at the subunit interface close to the decoding center, probably blocks exit of the E-site tRNA. In Pseudoalteromonas translucida (strain TAC 125), this protein is Small ribosomal subunit protein uS7.